A 1752-amino-acid chain; its full sequence is Chitin synthase E (1752 aa).

1-8 serves as a coordination point for ATP; sequence GESGSGKT. Positions 492–520 are disordered; sequence SSKPLRMPSMARRKTSPSSRLAFDAGDAD. The interval 558 to 582 is actin-binding; it reads LDIVNKCLSSTNLNPYFIFCLKPND. 2 helical membrane-spanning segments follow: residues 789–809 and 828–848; these read WIAL…KLFG and LIIW…PGLV. One can recognise a Cytochrome b5 heme-binding domain in the interval 852–940; it reads QHVYSAAELS…LLDYRPTNIS (89 aa). N-linked (GlcNAc...) asparagine glycosylation is found at N938 and N963. The helical transmembrane segment at 1099–1119 threads the bilayer; the sequence is FILAISVLICSIIVFKFLAAL. N1322, N1356, and N1462 each carry an N-linked (GlcNAc...) asparagine glycan. 3 helical membrane-spanning segments follow: residues 1494-1514, 1520-1540, and 1547-1567; these read LSTV…YWLV, IPYT…LIFI, and MVGW…PCPS. A glycan (N-linked (GlcNAc...) asparagine) is linked at N1685. One can recognise a DEK-C domain in the interval 1689 to 1744; the sequence is LPSDDAILAEIREILRTADLMSVTKKSIKLELERAFGVNLDLKRPYINSGKGYTFP.

It in the N-terminal section; belongs to the TRAFAC class myosin-kinesin ATPase superfamily. Myosin family. This sequence in the C-terminal section; belongs to the chitin synthase family. Class V subfamily.

The protein localises to the cell membrane. Its subcellular location is the cell septum. It localises to the cell tip. It catalyses the reaction [(1-&gt;4)-N-acetyl-beta-D-glucosaminyl](n) + UDP-N-acetyl-alpha-D-glucosamine = [(1-&gt;4)-N-acetyl-beta-D-glucosaminyl](n+1) + UDP + H(+). Polymerizes chitin, a structural polymer of the cell wall and septum, by transferring the sugar moiety of UDP-GlcNAc to the non-reducing end of the growing chitin polymer. Important for hyphal growth and conidiophore development but not pathogenicity. This Aspergillus fumigatus (Neosartorya fumigata) protein is Chitin synthase E.